The sequence spans 377 residues: Phosphatidylserine decarboxylase proenzyme, mitochondrial (377 aa).

Residues methionine 1–leucine 34 constitute a mitochondrion transit peptide. At threonine 35 to lysine 61 the chain is on the mitochondrial matrix side. Residues tryptophan 62–phenylalanine 80 traverse the membrane as a helical segment. Topologically, residues threonine 81–valine 377 are mitochondrial intermembrane. Catalysis depends on charge relay system; for autoendoproteolytic cleavage activity residues aspartate 181, histidine 238, and serine 344. Serine 344 serves as the catalytic Schiff-base intermediate with substrate; via pyruvic acid; for decarboxylase activity. At serine 344 the chain carries Pyruvic acid (Ser); by autocatalysis.

The protein belongs to the phosphatidylserine decarboxylase family. PSD-B subfamily. Eukaryotic type I sub-subfamily. In terms of assembly, heterodimer of a large membrane-associated beta subunit and a small pyruvoyl-containing alpha subunit. It depends on pyruvate as a cofactor. Post-translationally, is synthesized initially as an inactive proenzyme. Formation of the active enzyme involves a self-maturation process in which the active site pyruvoyl group is generated from an internal serine residue via an autocatalytic post-translational modification. Two non-identical subunits are generated from the proenzyme in this reaction, and the pyruvate is formed at the N-terminus of the alpha chain, which is derived from the carboxyl end of the proenzyme. The autoendoproteolytic cleavage occurs by a canonical serine protease mechanism, in which the side chain hydroxyl group of the serine supplies its oxygen atom to form the C-terminus of the beta chain, while the remainder of the serine residue undergoes an oxidative deamination to produce ammonia and the pyruvoyl prosthetic group on the alpha chain. During this reaction, the Ser that is part of the protease active site of the proenzyme becomes the pyruvoyl prosthetic group, which constitutes an essential element of the active site of the mature decarboxylase.

The protein resides in the mitochondrion inner membrane. The enzyme catalyses a 1,2-diacyl-sn-glycero-3-phospho-L-serine + H(+) = a 1,2-diacyl-sn-glycero-3-phosphoethanolamine + CO2. Its pathway is phospholipid metabolism; phosphatidylethanolamine biosynthesis; phosphatidylethanolamine from CDP-diacylglycerol: step 2/2. Functionally, catalyzes the formation of phosphatidylethanolamine (PtdEtn) from phosphatidylserine (PtdSer). Plays a central role in phospholipid metabolism and in the interorganelle trafficking of phosphatidylserine. This chain is Phosphatidylserine decarboxylase proenzyme, mitochondrial, found in Caenorhabditis elegans.